A 215-amino-acid polypeptide reads, in one-letter code: Protein C' (215 aa).

The segment at 12–34 (MPSFLKKILKLRGRRQEDESRSR) is disordered. Positions 15–22 (FLKKILKL) are involved in self-degradation and in host STAT1 degradation. A compositionally biased stretch (basic and acidic residues) spans 25 to 35 (RRQEDESRSRM). Polar residues predominate over residues 36-66 (LSDSSTQSYQVNQLTSEETEAGSTIPSTPSK).

The protein belongs to the respirovirus protein C family. In terms of assembly, the different isoforms interact (via C-terminus) with unphosphorylated and phosphorylated human STAT1 (via N-terminus), favoring the formation of parallel STAT1 homodimers. The different isoforms do not interact with host STAT2. C protein interacts with L protein; this interaction has an inhibitory effect on viral transcription and replication. Post-translationally, protein Y1 is produced not only by alternative initiation, but also by proteolytic cleavage of C'. Only alternative initiation is detected in vitro, whereas in vivo cleavage seems to be predominant.

It is found in the host cytoplasm. Its function is as follows. The different products prevent the establishment of cellular antiviral state by blocking the interferon-alpha/beta (IFN-alpha/beta) and IFN-gamma signaling pathways. They inhibit IFN-alpha/beta induced tyrosine phosphorylation of STAT1 and STAT2. Blocking the IFN-alpha/beta pathway requires binding to STAT1 in the cytoplasm. They inhibit IFN-gamma induced serine phosphorylation of STAT1. Block the IFN-gamma pathway by binding to and stabilizing the parallel form of the STAT1 dimer, further inducing high-molecular-weight complex formation and inhibition of transcription by IFN-gamma. May also have a role in preventing the cell to enter apoptosis. Modulate regulation of viral transcription and replication. Overexpression inhibits the viral RNA polymerase. The absence of all C', C and Y1 proteins leads to viral delayed growth. Plays an important role in virion particles release. Modulates virion shape. The sequence is that of Protein C' (P/V/C) from Cavia cutleri (Guinea pig).